Here is a 391-residue protein sequence, read N- to C-terminus: NAD(P)H-quinone oxidoreductase subunit H, chloroplastic (391 aa).

It belongs to the complex I 49 kDa subunit family. NDH is composed of at least 16 different subunits, 5 of which are encoded in the nucleus.

It is found in the plastid. The protein resides in the chloroplast thylakoid membrane. The enzyme catalyses a plastoquinone + NADH + (n+1) H(+)(in) = a plastoquinol + NAD(+) + n H(+)(out). The catalysed reaction is a plastoquinone + NADPH + (n+1) H(+)(in) = a plastoquinol + NADP(+) + n H(+)(out). Functionally, NDH shuttles electrons from NAD(P)H:plastoquinone, via FMN and iron-sulfur (Fe-S) centers, to quinones in the photosynthetic chain and possibly in a chloroplast respiratory chain. The immediate electron acceptor for the enzyme in this species is believed to be plastoquinone. Couples the redox reaction to proton translocation, and thus conserves the redox energy in a proton gradient. This is NAD(P)H-quinone oxidoreductase subunit H, chloroplastic from Mesostigma viride (Green alga).